Here is a 769-residue protein sequence, read N- to C-terminus: Probable beta-glucosidase M (769 aa).

Residues 1 to 22 (MHSNVGLAGLAGLLATASVCLS) form the signal peptide. Residues Asn-28, Asn-75, and Asn-262 are each glycosylated (N-linked (GlcNAc...) asparagine). Asp-290 is a catalytic residue. Asn-318, Asn-325, Asn-396, Asn-437, Asn-510, Asn-546, and Asn-625 each carry an N-linked (GlcNAc...) asparagine glycan.

Belongs to the glycosyl hydrolase 3 family.

The protein resides in the secreted. The catalysed reaction is Hydrolysis of terminal, non-reducing beta-D-glucosyl residues with release of beta-D-glucose.. It functions in the pathway glycan metabolism; cellulose degradation. In terms of biological role, beta-glucosidases are one of a number of cellulolytic enzymes involved in the degradation of cellulosic biomass. Catalyzes the last step releasing glucose from the inhibitory cellobiose. The chain is Probable beta-glucosidase M (bglM) from Aspergillus fumigatus (strain CBS 144.89 / FGSC A1163 / CEA10) (Neosartorya fumigata).